A 132-amino-acid chain; its full sequence is Small ribosomal subunit protein uS8 (132 aa).

Belongs to the universal ribosomal protein uS8 family. As to quaternary structure, part of the 30S ribosomal subunit. Contacts proteins S5 and S12.

One of the primary rRNA binding proteins, it binds directly to 16S rRNA central domain where it helps coordinate assembly of the platform of the 30S subunit. The chain is Small ribosomal subunit protein uS8 from Streptomyces avermitilis (strain ATCC 31267 / DSM 46492 / JCM 5070 / NBRC 14893 / NCIMB 12804 / NRRL 8165 / MA-4680).